The sequence spans 127 residues: Major sperm protein 77/79 (127 aa).

Position 2 is an N-acetylalanine (Ala2). The MSP domain occupies 9–126; it reads DIQTQPGTKI…RRKNLPIEYN (118 aa).

As to expression, sperm.

It is found in the cell projection. It localises to the pseudopodium. Its subcellular location is the cytoplasm. The protein localises to the cytoskeleton. Central component in molecular interactions underlying sperm crawling. Forms an extensive filament system that extends from sperm villipoda, along the leading edge of the pseudopod. The sequence is that of Major sperm protein 77/79 (msp-77) from Caenorhabditis elegans.